The primary structure comprises 101 residues: NAD(P)H-quinone oxidoreductase subunit 4L, chloroplastic (101 aa).

The next 3 membrane-spanning stretches (helical) occupy residues methionine 2–isoleucine 22, methionine 32–phenylalanine 52, and isoleucine 61–valine 81.

The protein belongs to the complex I subunit 4L family. NDH is composed of at least 16 different subunits, 5 of which are encoded in the nucleus.

It is found in the plastid. Its subcellular location is the chloroplast thylakoid membrane. The catalysed reaction is a plastoquinone + NADH + (n+1) H(+)(in) = a plastoquinol + NAD(+) + n H(+)(out). It carries out the reaction a plastoquinone + NADPH + (n+1) H(+)(in) = a plastoquinol + NADP(+) + n H(+)(out). Functionally, NDH shuttles electrons from NAD(P)H:plastoquinone, via FMN and iron-sulfur (Fe-S) centers, to quinones in the photosynthetic chain and possibly in a chloroplast respiratory chain. The immediate electron acceptor for the enzyme in this species is believed to be plastoquinone. Couples the redox reaction to proton translocation, and thus conserves the redox energy in a proton gradient. The sequence is that of NAD(P)H-quinone oxidoreductase subunit 4L, chloroplastic from Gossypium hirsutum (Upland cotton).